The primary structure comprises 284 residues: Pantothenate synthetase (284 aa).

30 to 37 (MGNLHNAH) lines the ATP pocket. His-37 (proton donor) is an active-site residue. Gln-61 contacts (R)-pantoate. Residue Gln-61 participates in beta-alanine binding. Residue 149–152 (GIKD) coordinates ATP. Gln-155 lines the (R)-pantoate pocket. ATP is bound by residues Val-178 and 186–189 (MSSR).

Belongs to the pantothenate synthetase family. In terms of assembly, homodimer.

It is found in the cytoplasm. The catalysed reaction is (R)-pantoate + beta-alanine + ATP = (R)-pantothenate + AMP + diphosphate + H(+). The protein operates within cofactor biosynthesis; (R)-pantothenate biosynthesis; (R)-pantothenate from (R)-pantoate and beta-alanine: step 1/1. Catalyzes the condensation of pantoate with beta-alanine in an ATP-dependent reaction via a pantoyl-adenylate intermediate. The chain is Pantothenate synthetase from Saccharophagus degradans (strain 2-40 / ATCC 43961 / DSM 17024).